Consider the following 492-residue polypeptide: Protein GvpD2 (492 aa).

An ATP-binding site is contributed by glycine 39–threonine 46. The span at arginine 355–glycine 368 shows a compositional bias: basic and acidic residues. Positions arginine 355–leucine 379 are disordered.

Belongs to the gas vesicle GvpD family. As to quaternary structure, homodimer. Interacts with GvpE, also with GvpE from H.mediterranei.

Its subcellular location is the cytoplasm. Causes a decrease in the amount of GvpE protein. Gas vesicles are hollow, gas filled proteinaceous nanostructures found in several microbial planktonic microorganisms. They allow positioning of halobacteria at the optimal depth for growth in the poorly aerated, shallow brine pools of their habitat. Its function is as follows. Expression of 2 c-vac DNA fragments containing 2 divergently transcribed regions (gvpE-gvpF-gvpG-gvpH-gvpI-gvpJ-gvpK-gvpL-gvpM and gvpA-gvpC-gvpN-gvpO) allows H.volcanii to produce gas vesicles. This chain is Protein GvpD2, found in Halobacterium salinarum (strain ATCC 700922 / JCM 11081 / NRC-1) (Halobacterium halobium).